We begin with the raw amino-acid sequence, 172 residues long: MTQTIFMVGARAAGKTTIGQALANALSYPFVDTDLYMLETTNLTVADVVVTEGWEGFRRRESEALRTVTKPGIVVATGGGMVLSEENRDFMRANGTVFYLSAPAEVLAARLEAYPDAGQRPTLTGRPIVEEVSEVLAARENLYRSAAHHVLDASVAPEAVLVQALELLKKQA.

9–16 (GARAAGKT) contacts ATP.

The protein belongs to the shikimate kinase family.

It is found in the cytoplasm. It catalyses the reaction shikimate + ATP = 3-phosphoshikimate + ADP + H(+). The protein operates within metabolic intermediate biosynthesis; chorismate biosynthesis; chorismate from D-erythrose 4-phosphate and phosphoenolpyruvate: step 5/7. The polypeptide is Shikimate kinase 2 (Syntrophotalea carbinolica (strain DSM 2380 / NBRC 103641 / GraBd1) (Pelobacter carbinolicus)).